The primary structure comprises 633 residues: Alpha-amylase (633 aa).

Residue Glu-123 is the Nucleophile of the active site. Catalysis depends on Asp-214, which acts as the Proton donor.

It belongs to the glycosyl hydrolase 57 family.

The enzyme catalyses Endohydrolysis of (1-&gt;4)-alpha-D-glucosidic linkages in polysaccharides containing three or more (1-&gt;4)-alpha-linked D-glucose units.. The sequence is that of Alpha-amylase (amyA) from Pyrococcus horikoshii (strain ATCC 700860 / DSM 12428 / JCM 9974 / NBRC 100139 / OT-3).